Consider the following 325-residue polypeptide: Bifunctional ligase/repressor BirA (325 aa).

The segment at residues 23–42 is a DNA-binding region (H-T-H motif); the sequence is GQKISDALGCSRTAVWKHIE. The 189-residue stretch at 74 to 262 folds into the BPL/LPL catalytic domain; that stretch reads RFGLKTEVMG…CFEKRYRDYM (189 aa). Biotin is bound by residues Gln118, 122-124, and Lys189; that span reads RGR.

The protein belongs to the biotin--protein ligase family.

The catalysed reaction is biotin + L-lysyl-[protein] + ATP = N(6)-biotinyl-L-lysyl-[protein] + AMP + diphosphate + H(+). Functionally, acts both as a biotin--[acetyl-CoA-carboxylase] ligase and a repressor. The polypeptide is Bifunctional ligase/repressor BirA (Bacillus spizizenii (strain ATCC 23059 / NRRL B-14472 / W23) (Bacillus subtilis subsp. spizizenii)).